A 431-amino-acid chain; its full sequence is PHD finger-containing protein 1 (431 aa).

The PHD-type zinc finger occupies 7-59; the sequence is GPVCQTCGDIGFEEALVFCDSCMFESIHRYCLGITPIPFTEYITWICEDCDNS. Residues Cys10, Cys13, Cys25, Cys28, His34, Cys37, Cys53, and Cys56 each coordinate Zn(2+). The interval 125-221 is disordered; it reads EAADSSSVPD…QESSDSRKPH (97 aa). The span at 128 to 139 shows a compositional bias: polar residues; that stretch reads DSSSVPDHSSCT. The segment covering 160–171 has biased composition (basic residues); the sequence is KKKKKKKKKKSI. Positions 191–202 are enriched in low complexity; it reads VVEPVEVSSSSP. Positions 205-221 are enriched in basic and acidic residues; that stretch reads ETMESKRQESSDSRKPH.

In terms of assembly, interacts directly with AIPP3/BDT1.

Functionally, together with AIPP3/BDT1, cooperates to form a BAH-PHD bivalent histone reader complex able to read histone H3 lysine 27 trimethylation (H3K27me3) histone marks in order to regulate transcription, especially to prevent early flowering; promotes AIPP3/BDT1 binding to H3K27me3. The chain is PHD finger-containing protein 1 from Arabidopsis thaliana (Mouse-ear cress).